Here is a 942-residue protein sequence, read N- to C-terminus: Valine--tRNA ligase (942 aa).

The 'HIGH' region signature appears at Pro-43–His-53. The short motif at Lys-551 to Ser-555 is the 'KMSKS' region element. Lys-554 is an ATP binding site. Residues Glu-876–Leu-942 adopt a coiled-coil conformation.

This sequence belongs to the class-I aminoacyl-tRNA synthetase family. ValS type 1 subfamily. In terms of assembly, monomer.

The protein resides in the cytoplasm. It carries out the reaction tRNA(Val) + L-valine + ATP = L-valyl-tRNA(Val) + AMP + diphosphate. In terms of biological role, catalyzes the attachment of valine to tRNA(Val). As ValRS can inadvertently accommodate and process structurally similar amino acids such as threonine, to avoid such errors, it has a 'posttransfer' editing activity that hydrolyzes mischarged Thr-tRNA(Val) in a tRNA-dependent manner. The chain is Valine--tRNA ligase from Stenotrophomonas maltophilia (strain K279a).